The sequence spans 368 residues: Glutamate 5-kinase (368 aa).

ATP is bound at residue Lys-10. Residues Ser-50, Asp-137, and Asn-149 each coordinate substrate. Position 169–170 (169–170 (TD)) interacts with ATP. Residues 276-354 (RGTLVLDDGA…ESIVRELGYM (79 aa)) form the PUA domain.

This sequence belongs to the glutamate 5-kinase family.

The protein localises to the cytoplasm. It carries out the reaction L-glutamate + ATP = L-glutamyl 5-phosphate + ADP. It functions in the pathway amino-acid biosynthesis; L-proline biosynthesis; L-glutamate 5-semialdehyde from L-glutamate: step 1/2. Its function is as follows. Catalyzes the transfer of a phosphate group to glutamate to form L-glutamate 5-phosphate. This chain is Glutamate 5-kinase, found in Pseudomonas savastanoi pv. phaseolicola (strain 1448A / Race 6) (Pseudomonas syringae pv. phaseolicola (strain 1448A / Race 6)).